The following is a 298-amino-acid chain: 4-hydroxy-tetrahydrodipicolinate synthase (298 aa).

Pyruvate is bound at residue T48. Residue Y137 is the Proton donor/acceptor of the active site. The active-site Schiff-base intermediate with substrate is the K166. Residue I207 participates in pyruvate binding.

The protein belongs to the DapA family. Homotetramer; dimer of dimers.

The protein localises to the cytoplasm. The enzyme catalyses L-aspartate 4-semialdehyde + pyruvate = (2S,4S)-4-hydroxy-2,3,4,5-tetrahydrodipicolinate + H2O + H(+). The protein operates within amino-acid biosynthesis; L-lysine biosynthesis via DAP pathway; (S)-tetrahydrodipicolinate from L-aspartate: step 3/4. Its function is as follows. Catalyzes the condensation of (S)-aspartate-beta-semialdehyde [(S)-ASA] and pyruvate to 4-hydroxy-tetrahydrodipicolinate (HTPA). The chain is 4-hydroxy-tetrahydrodipicolinate synthase from Campylobacter jejuni subsp. doylei (strain ATCC BAA-1458 / RM4099 / 269.97).